A 274-amino-acid polypeptide reads, in one-letter code: Large ribosomal subunit protein uL2 (274 aa).

Disordered stretches follow at residues 28–53 (KPYA…TVRH) and 223–274 (VAMN…RRTK). Positions 39–48 (KSGGRNNNGR) are enriched in low complexity. Residues 254–274 (KGAKTRKNKRTDKFIVRRRTK) show a composition bias toward basic residues.

It belongs to the universal ribosomal protein uL2 family. Part of the 50S ribosomal subunit. Forms a bridge to the 30S subunit in the 70S ribosome.

Its function is as follows. One of the primary rRNA binding proteins. Required for association of the 30S and 50S subunits to form the 70S ribosome, for tRNA binding and peptide bond formation. It has been suggested to have peptidyltransferase activity; this is somewhat controversial. Makes several contacts with the 16S rRNA in the 70S ribosome. The polypeptide is Large ribosomal subunit protein uL2 (Pseudoalteromonas translucida (strain TAC 125)).